A 215-amino-acid polypeptide reads, in one-letter code: Jasmonate monooxygenase ABM (215 aa).

In terms of domain architecture, ABM spans 2 to 90 (FAVIFETRPQ…GVLEDYHLRV (89 aa)).

It is found in the endoplasmic reticulum. The protein resides in the secreted. It catalyses the reaction jasmonate + NADPH + O2 + H(+) = (1R,2R)-12-hydroxyjasmonate + NADP(+) + H2O. Its function is as follows. Monooxygenase that converts the endogenous (and likely the host) jasmonate (JA) to its hydroxylated derivative 12-hydroxyjasmonate (12OH-JA), also known as tuberonic acid, a compound that attenuates or disables jasmonate-based host innate immunity and which is essential for proper initiation and elaboration of the blast disease in rice. ABM, together with a polyketide synthase MGG_04775 and the esterase MGG_04774, share the secondary metabolism gene cluster with ABC transporter ABC3, and therefore may also be involved in the synthesis of other important metabolites such as the ABC3 transporter efflux substrate (ATS) and/or additional polyketides. In Pyricularia oryzae (strain 70-15 / ATCC MYA-4617 / FGSC 8958) (Rice blast fungus), this protein is Jasmonate monooxygenase ABM.